A 171-amino-acid chain; its full sequence is MEHSTFLSGLVLATLLSQVSPFKIPVEELEDRVFVKCNTSVTWVEGTVGTLLTNNTRLDLGKRILDPRGIYRCNGTDIYKDKESAVQVHYRMCQNCVELDPATLAGIIVTDVIATLLLALGVFCFAGHETGRLSGAADTQALLRNDQVYQPLRDRDDAQYSRLGGNWARNK.

The first 21 residues, 1–21 (MEHSTFLSGLVLATLLSQVSP), serve as a signal peptide directing secretion. Residues 22–105 (FKIPVEELED…CVELDPATLA (84 aa)) lie on the Extracellular side of the membrane. Cysteine 37 and cysteine 73 form a disulfide bridge. Asparagine 38, asparagine 54, and asparagine 74 each carry an N-linked (GlcNAc...) asparagine glycan. The chain crosses the membrane as a helical span at residues 106 to 126 (GIIVTDVIATLLLALGVFCFA). Residues 127-171 (GHETGRLSGAADTQALLRNDQVYQPLRDRDDAQYSRLGGNWARNK) are Cytoplasmic-facing. One can recognise an ITAM domain in the interval 138-166 (DTQALLRNDQVYQPLRDRDDAQYSRLGGN). 2 positions are modified to phosphotyrosine: tyrosine 149 and tyrosine 160.

As to quaternary structure, the TCR-CD3 complex is composed of a CD3D/CD3E and a CD3G/CD3E heterodimers that preferentially associate with TCRalpha and TCRbeta, respectively, to form TCRalpha/CD3E/CD3G and TCRbeta/CD3G/CD3E trimers. In turn, the hexamer interacts with CD3Z homodimer to form the TCR-CD3 complex. Alternatively, TCRalpha and TCRbeta can be replaced by TCRgamma and TCRdelta. Interacts with coreceptors CD4 and CD8. In terms of processing, phosphorylated on Tyr residues after T-cell receptor triggering by LCK in association with CD4/CD8. As to expression, CD3D is mostly present on T-lymphocytes with its TCR-CD3 partners. Present also in fetal NK-cells.

It localises to the cell membrane. Part of the TCR-CD3 complex present on T-lymphocyte cell surface that plays an essential role in adaptive immune response. When antigen presenting cells (APCs) activate T-cell receptor (TCR), TCR-mediated signals are transmitted across the cell membrane by the CD3 chains CD3D, CD3E, CD3G and CD3Z. All CD3 chains contain immunoreceptor tyrosine-based activation motifs (ITAMs) in their cytoplasmic domain. Upon TCR engagement, these motifs become phosphorylated by Src family protein tyrosine kinases LCK and FYN, resulting in the activation of downstream signaling pathways. In addition of this role of signal transduction in T-cell activation, CD3D plays an essential role in thymocyte differentiation. Indeed, participates in correct intracellular TCR-CD3 complex assembly and surface expression. In absence of a functional TCR-CD3 complex, thymocytes are unable to differentiate properly. Interacts with CD4 and CD8 and thus serves to establish a functional link between the TCR and coreceptors CD4 and CD8, which is needed for activation and positive selection of CD4 or CD8 T-cells. The polypeptide is T-cell surface glycoprotein CD3 delta chain (CD3D) (Macaca fascicularis (Crab-eating macaque)).